A 156-amino-acid chain; its full sequence is Arginine repressor (156 aa).

Belongs to the ArgR family.

It localises to the cytoplasm. It participates in amino-acid biosynthesis; L-arginine biosynthesis [regulation]. Functionally, regulates arginine biosynthesis genes. The sequence is that of Arginine repressor from Shewanella pealeana (strain ATCC 700345 / ANG-SQ1).